The chain runs to 312 residues: DNA-directed RNA polymerase subunit alpha (312 aa).

Positions 1–226 are alpha N-terminal domain (alpha-NTD); it reads MIEFEKPIIT…EHLNLFTDLT (226 aa). The tract at residues 242–312 is alpha C-terminal domain (alpha-CTD); that stretch reads NDEKLLDRTI…DLGLGLKNDK (71 aa).

The protein belongs to the RNA polymerase alpha chain family. As to quaternary structure, homodimer. The RNAP catalytic core consists of 2 alpha, 1 beta, 1 beta' and 1 omega subunit. When a sigma factor is associated with the core the holoenzyme is formed, which can initiate transcription.

The catalysed reaction is RNA(n) + a ribonucleoside 5'-triphosphate = RNA(n+1) + diphosphate. DNA-dependent RNA polymerase catalyzes the transcription of DNA into RNA using the four ribonucleoside triphosphates as substrates. This Streptococcus thermophilus (strain CNRZ 1066) protein is DNA-directed RNA polymerase subunit alpha.